Consider the following 321-residue polypeptide: Lipoyl synthase (321 aa).

Positions 68, 73, 79, 94, 98, 101, and 308 each coordinate [4Fe-4S] cluster. One can recognise a Radical SAM core domain in the interval 80 to 297; it reads FNHGTATFMI…KEVALELGFT (218 aa).

The protein belongs to the radical SAM superfamily. Lipoyl synthase family. It depends on [4Fe-4S] cluster as a cofactor.

The protein localises to the cytoplasm. The catalysed reaction is [[Fe-S] cluster scaffold protein carrying a second [4Fe-4S](2+) cluster] + N(6)-octanoyl-L-lysyl-[protein] + 2 oxidized [2Fe-2S]-[ferredoxin] + 2 S-adenosyl-L-methionine + 4 H(+) = [[Fe-S] cluster scaffold protein] + N(6)-[(R)-dihydrolipoyl]-L-lysyl-[protein] + 4 Fe(3+) + 2 hydrogen sulfide + 2 5'-deoxyadenosine + 2 L-methionine + 2 reduced [2Fe-2S]-[ferredoxin]. Its pathway is protein modification; protein lipoylation via endogenous pathway; protein N(6)-(lipoyl)lysine from octanoyl-[acyl-carrier-protein]: step 2/2. Functionally, catalyzes the radical-mediated insertion of two sulfur atoms into the C-6 and C-8 positions of the octanoyl moiety bound to the lipoyl domains of lipoate-dependent enzymes, thereby converting the octanoylated domains into lipoylated derivatives. The chain is Lipoyl synthase from Vibrio parahaemolyticus serotype O3:K6 (strain RIMD 2210633).